A 294-amino-acid chain; its full sequence is Probable 2-(5''-triphosphoribosyl)-3'-dephosphocoenzyme-A synthase (294 aa).

The protein belongs to the CitG/MdcB family.

The enzyme catalyses 3'-dephospho-CoA + ATP = 2'-(5''-triphospho-alpha-D-ribosyl)-3'-dephospho-CoA + adenine. This chain is Probable 2-(5''-triphosphoribosyl)-3'-dephosphocoenzyme-A synthase, found in Streptococcus pyogenes serotype M2 (strain MGAS10270).